A 236-amino-acid polypeptide reads, in one-letter code: MSESSSEDENTARLKEAVWSFKPEDVKINGKENNGRQSHRADVSKHEHDGNELGTTPEFRSHVAKKLGTYLDGCISEVCSDTVEPAQSENREDEEGFRLFSSSTPGKWMEQSPPPPPKRRPVPSSSDSDSEMEMRFREAAVSLSDILGPVAQNLSEKTEEKSTKEETEDTVTKMKKKKKRKTSSEESQDKVNHQTEKQSNVEGNQEQTTAGERLKKKKKKKKKKRKKLEKDIKKDE.

Disordered stretches follow at residues 1–57 (MSES…GTTP) and 83–236 (VEPA…KKDE). Basic and acidic residues-rich tracts occupy residues 10–51 (NTAR…HDGN) and 156–165 (EKTEEKSTKE). Positions 173-181 (KMKKKKKRK) match the Nucleolar localization signal (NLS1) motif. Residues 182–196 (TSSEESQDKVNHQTE) are compositionally biased toward basic and acidic residues. Residues 197-210 (KQSNVEGNQEQTTA) show a composition bias toward polar residues. The Nucleolar localization signal (NLS2) signature appears at 211-219 (GERLKKKKK). The span at 214 to 227 (LKKKKKKKKKKRKK) shows a compositional bias: basic residues.

The protein belongs to the CUSTOS family. As to quaternary structure, interacts (via NLS1 and NLS2) with dvl2; the interaction is negatively regulated by Wnt stimulation. Interacts with csnk1a1. Interacts with ctnnb1; the interaction is positively regulated by Wnt stimulation. Phosphorylated by ck1/csnk1a1.

The protein localises to the nucleus envelope. Essential for Spemann-Mangold organizer formation and subsequent anterior head development in the embryo. Inhibits canonical Wnt signaling pathway by antagonizing nuclear import of beta-catenin (ctnnb1) during embryogenesis. This chain is Protein CUSTOS, found in Danio rerio (Zebrafish).